The following is a 346-amino-acid chain: Protein RecA (346 aa).

65–72 (GPESSGKT) provides a ligand contact to ATP.

This sequence belongs to the RecA family.

Its subcellular location is the cytoplasm. Functionally, can catalyze the hydrolysis of ATP in the presence of single-stranded DNA, the ATP-dependent uptake of single-stranded DNA by duplex DNA, and the ATP-dependent hybridization of homologous single-stranded DNAs. It interacts with LexA causing its activation and leading to its autocatalytic cleavage. In Pseudomonas aeruginosa (strain UCBPP-PA14), this protein is Protein RecA.